A 285-amino-acid chain; its full sequence is 1-deoxypentalenic acid 11-beta-hydroxylase (285 aa).

Residue R117 participates in substrate binding. H137 and D139 together coordinate Fe cation. 2-oxoglutarate-binding positions include 137–139 (HQD) and W153. Substrate is bound at residue R188. H226 serves as a coordination point for Fe cation. 2-oxoglutarate contacts are provided by S228 and R240.

The protein belongs to the PhyH family. The cofactor is Fe cation. It depends on L-ascorbate as a cofactor.

The catalysed reaction is 1-deoxypentalenate + 2-oxoglutarate + O2 = 1-deoxy-11beta-hydroxypentalenate + succinate + CO2. It participates in antibiotic biosynthesis; neopentalenolactone biosynthesis. Catalyzes the conversion of 1-deoxypentalenic acid to 11-beta-hydroxy-1-deoxypentalenic acid in the biosynthesis of neopentalenolactone antibiotic. The polypeptide is 1-deoxypentalenic acid 11-beta-hydroxylase (ptlH) (Streptomyces avermitilis (strain ATCC 31267 / DSM 46492 / JCM 5070 / NBRC 14893 / NCIMB 12804 / NRRL 8165 / MA-4680)).